The sequence spans 528 residues: Cytochrome P450 monooxygenase polB (528 aa).

A helical membrane pass occupies residues 3–23 (SFFLVCPVAFLGFTICYLVYV). C473 contacts heme.

This sequence belongs to the cytochrome P450 family. The cofactor is heme.

Its subcellular location is the membrane. The enzyme catalyses 4beta-carboxyl motiol + reduced [NADPH--hemoprotein reductase] + O2 = 2alpha-hydroxyl, 4beta-carboxyl motiol + oxidized [NADPH--hemoprotein reductase] + H2O + H(+). It carries out the reaction 2-deoxypolytolypin + reduced [NADPH--hemoprotein reductase] + O2 = polytolypin + oxidized [NADPH--hemoprotein reductase] + H2O + H(+). Its pathway is secondary metabolite biosynthesis; terpenoid biosynthesis. In terms of biological role, cytochrome P450 monooxygenase; part of the gene cluster that mediates the biosynthesis of antifungal fernane-type triterpenoid polytolypin. PolB acts as a hydroxylase and installs the 2-alpha-hydroxyl group in polytolypin. Within the pathway, the triterpene cyclase polA first catalyzes the cyclization of 2,3-oxidosqualene to motiol, polC converts the 4-alpha-methyl group of motiol to a carboxyl group, polB is responsible for appending a hydroxyl group at the 2-alpha position and polE is a dual functional P450, which can catalyze the formation of both the 1-beta-hydroxyl group and 10-beta-carboxyl group. The chain is Cytochrome P450 monooxygenase polB from Polytolypa hystricis (strain UAMH7299).